The sequence spans 82 residues: MTIKHPLVTEKAMNDMDFENKLQFVCHPEATKGDIAAAVESQFDVEVDSINTQVRMDGDKKAIVELSADDDAQEVASRIGVF.

This sequence belongs to the universal ribosomal protein uL23 family. In terms of assembly, part of the 50S ribosomal subunit. Contacts protein L29.

Its function is as follows. Binds to 23S rRNA. One of the proteins that surrounds the polypeptide exit tunnel on the outside of the ribosome. In Natronomonas pharaonis (strain ATCC 35678 / DSM 2160 / CIP 103997 / JCM 8858 / NBRC 14720 / NCIMB 2260 / Gabara) (Halobacterium pharaonis), this protein is Large ribosomal subunit protein uL23.